A 661-amino-acid polypeptide reads, in one-letter code: B3 domain-containing protein Os12g0591400 (661 aa).

DNA-binding regions (TF-B3) lie at residues 2 to 95, 197 to 290, 437 to 535, and 562 to 658; these read GDQK…FNPS, KTRC…FNPS, LYIT…FKES, and TNLT…IRKG.

It is found in the nucleus. This chain is B3 domain-containing protein Os12g0591400, found in Oryza sativa subsp. japonica (Rice).